We begin with the raw amino-acid sequence, 266 residues long: Aquaporin TIP3-2 (266 aa).

The next 2 helical transmembrane spans lie at 29–49 (AAISEFIATAIFVFAAEGSVL) and 66–86 (GLVAVALAHALGLAVAVAVAV). An NPA 1 motif is present at residues 94-96 (NPA). The next 3 membrane-spanning stretches (helical) occupy residues 109–129 (LVRAVLYWAAQLLGAVAATLL), 153–173 (AVLLEAVMTFGFVYAYYATVV), and 180–200 (LGTIAPLAVGFLLGANVLAGG). The NPA 2 signature appears at 208 to 210 (NPA). A helical membrane pass occupies residues 228-248 (YWLGPFLGAGLAGLVYEYLLI).

It belongs to the MIP/aquaporin (TC 1.A.8) family. TIP (TC 1.A.8.10) subfamily.

It localises to the vacuole membrane. Its function is as follows. Aquaporins facilitate the transport of water and small neutral solutes across cell membranes. The chain is Aquaporin TIP3-2 (TIP3-2) from Zea mays (Maize).